Consider the following 827-residue polypeptide: Inactive rhomboid protein 2 (827 aa).

Positions 1 to 87 (MDSTDKNGES…GFRRQASLSQ (87 aa)) are disordered. The Cytoplasmic segment spans residues 1 to 380 (MDSTDKNGES…HRPYFTYWLT (380 aa)). Ser60 is modified (phosphoserine). Over residues 64 to 77 (QRGRWQEGSSEKRP) the composition is skewed to basic and acidic residues. Residues Ser84, Ser88, Ser294, Ser296, and Ser299 each carry the phosphoserine modification. Residues 381–401 (FVHIIITLLVICTYGIAPVGF) traverse the membrane as a helical segment. Residues 402 to 631 (AQHVTTQLVL…PDQFYRLWLS (230 aa)) lie on the Lumenal side of the membrane. A helical transmembrane segment spans residues 632 to 652 (LFLHAGVVHCLVSVVFQMTIL). Topologically, residues 653 to 663 (RDLEKLAGWHR) are cytoplasmic. Residues 664–684 (IAIIFILSGITGNLASAIFLP) traverse the membrane as a helical segment. At 685–686 (YR) the chain is on the lumenal side. The chain crosses the membrane as a helical span at residues 687 to 707 (AEVGPAGSQFGLLACLFVELF). The Cytoplasmic portion of the chain corresponds to 708–718 (QSWQLLERPWK). A helical transmembrane segment spans residues 719–739 (AFLNLSAIVLFLFICGLLPWI). Residues 740-744 (DNIAH) are Lumenal-facing. Residues 745–765 (IFGFLSGLLLAFAFLPYITFG) form a helical membrane-spanning segment. Topologically, residues 766 to 773 (TSDKYRKR) are cytoplasmic. The helical transmembrane segment at 774 to 794 (ALILVSLLVFAGLFASLVIWL) threads the bilayer. Residues 795–827 (YVYPINWPWIEYLTCFPFTSRFCEKYELDQVLH) lie on the Lumenal side of the membrane.

The protein belongs to the peptidase S54 family. In terms of assembly, interacts with EGF. Interacts (via cytoplasmic N-terminus) with FRMD8/iTAP; this interaction leads to mutual protein stabilization. Interacts with ADAM17/TACE. Detected in retina and spleen.

The protein resides in the endoplasmic reticulum membrane. It localises to the cell membrane. Its function is as follows. Regulates ADAM17 protease, a sheddase of the epidermal growth factor (EGF) receptor ligands and TNF, thereby plays a role in sleep, cell survival, proliferation, migration and inflammation. Does not exhibit any protease activity on its own. This is Inactive rhomboid protein 2 (RHBDF2) from Canis lupus familiaris (Dog).